Consider the following 323-residue polypeptide: Sphingolipid delta(4)-desaturase DES1 (323 aa).

The N-myristoyl glycine moiety is linked to residue Gly-2. 2 helical membrane passes run 41–61 and 68–88; these read PNLIWIIIMMVLTQLGAFYIV and WVIFGAYAFGSCINHSMTLAI. The short motif at 89-93 is the Histidine box-1 element; it reads HEIAH. Residues 102–122 form a helical membrane-spanning segment; that stretch reads AMWNRWFGMFANLPIGIPYSI. Residues 128 to 132 carry the Histidine box-2 motif; sequence HMDHH. Transmembrane regions (helical) follow at residues 152–172, 184–204, and 209–229; these read FFCTAFRKFIWVILQPLFYAF, YLEVINTVAQVTFDILIYYFL, and LVYMLAASLLGLGLHPISGHF. Positions 259–263 match the Histidine box-3 motif; that stretch reads HNEHH. Ser-307 bears the Phosphoserine mark.

Belongs to the fatty acid desaturase type 1 family. DEGS subfamily. In terms of assembly, interacts with RLBP1; the interaction increases synthesis of chromophore-precursors by DEGS1. Myristoylation can target the enzyme to the mitochondria leading to an increase in ceramide levels. In terms of tissue distribution, ubiquitous.

Its subcellular location is the mitochondrion membrane. It is found in the endoplasmic reticulum membrane. The catalysed reaction is an N-acylsphinganine + 2 Fe(II)-[cytochrome b5] + O2 + 2 H(+) = an N-acylsphing-4-enine + 2 Fe(III)-[cytochrome b5] + 2 H2O. It catalyses the reaction all-trans-retinol = 11-cis-retinol. The enzyme catalyses all-trans-retinol = 9-cis-retinol. It carries out the reaction all-trans-retinol = 13-cis-retinol. The catalysed reaction is 11-cis-retinol = 13-cis-retinol. It catalyses the reaction 11-cis-retinol = 9-cis-retinol. In terms of biological role, has sphingolipid-delta-4-desaturase activity. Converts D-erythro-sphinganine to D-erythro-sphingosine (E-sphing-4-enine). Catalyzes the equilibrium isomerization of retinols. The sequence is that of Sphingolipid delta(4)-desaturase DES1 from Homo sapiens (Human).